The chain runs to 593 residues: Arginine--tRNA ligase (593 aa).

The short motif at 138–148 (ANPTGPLHVGH) is the 'HIGH' region element.

Belongs to the class-I aminoacyl-tRNA synthetase family. Monomer.

It localises to the cytoplasm. The enzyme catalyses tRNA(Arg) + L-arginine + ATP = L-arginyl-tRNA(Arg) + AMP + diphosphate. This Burkholderia ambifaria (strain ATCC BAA-244 / DSM 16087 / CCUG 44356 / LMG 19182 / AMMD) (Burkholderia cepacia (strain AMMD)) protein is Arginine--tRNA ligase.